Consider the following 275-residue polypeptide: Large ribosomal subunit protein uL2 (275 aa).

Residues 223–260 (VAMNPVDHPHGGGEGRTSGGRHPVSPWGLPTKGYKTRS) are disordered.

This sequence belongs to the universal ribosomal protein uL2 family. Part of the 50S ribosomal subunit. Forms a bridge to the 30S subunit in the 70S ribosome.

One of the primary rRNA binding proteins. Required for association of the 30S and 50S subunits to form the 70S ribosome, for tRNA binding and peptide bond formation. It has been suggested to have peptidyltransferase activity; this is somewhat controversial. Makes several contacts with the 16S rRNA in the 70S ribosome. This chain is Large ribosomal subunit protein uL2, found in Legionella pneumophila (strain Paris).